A 1036-amino-acid chain; its full sequence is MDGPPSPTRVPPSYTDGPPSYVDTPIADEDTMSVPGNNSSLRLLPQGQDEYRSISPPNRVSPDRYHRPAASTAYSSRPGSSLGRAPSIPLSSSNPRSPIRPSTPSRVSTDWTRPPAPSVAYEPPDINGSPRPGTPSSQYGGSPRRPLPPAPLFSAKGAAAETTIPMPEPESENDVFVDNYSIMPDNDPRASLKSAHSYTTDSTFTEDDDITNEKLNHYGPAPEGRQDRRGLREAQMTKKEVRLINGELILECKIPTILHSFLPRRDEREFTHMRYTAVTCDPDDFVVKGYKLRQNIGPTMRETELFICVTMYNEGEIEFTRTMHGIMRNIAHFCSRTRSRTWGKDGWQKIVVCVIADGRQKVHPRTLNALAAMGVYQDGIAKNVVNQKEVTAHVYEYTTQVSLDETLKFKGAEKGIVPCQMIFCLKEKNKKKLNSHRWFFNAFGRALIPNVCILLDVGTKPDSKALYHLWKAFDQNSNVAGAAGEIKADKGKGWLGLLNPLVASQNFEYKISNILDKPLESVFGYITVLPGALSAYRYHALQNDPSGHGPLSQYFKGETLHGRDADVFTANMYLAEDRILCWELVAKRDEQWVLKFVKSAYGETDVPDTVPEFISQRRRWLNGAFFAAVYALVHFKQIWRTDHSLTRKILLHIEFIYQFISLLFTFFSLANFYLTFYFVAGSLADPTIDPFGHNIGKYIFVILRYVCVLLICLQFILSLGNRPQGAKKLFLSTMVTYSIIMAYTTFASVYIVIKQLTTHALEKTDPNNPYKLGNNIFTNLIVSSVSTIGLFFLMSFLYLDPWHMFTSSAQYFALLPSYICTLQVYAFCNTHDVTWGTKGDNVMHTDLGAAKAIGSGNTVEVEMPSEQLDIDSAYDVALRNLRDRVEVPKPPVSENQLQEDYYKSVRTYVVASYMVCNAILAMAVSEAYPVGSHIGSNFYLTFILWSVAALALFRAIGSSAFGVINIVSAIAEGRIQAKFERIFGGGDERGRHRAGLGSGFSESGKTGITSGSGMSGMSLSDVTSKISEKFSWMSGK.

Residues 1 to 10 (MDGPPSPTRV) are compositionally biased toward pro residues. The interval 1-153 (MDGPPSPTRV…RRPLPPAPLF (153 aa)) is disordered. A glycan (N-linked (GlcNAc...) asparagine) is linked at Asn38. Residues 86 to 108 (PSIPLSSSNPRSPIRPSTPSRVS) show a composition bias toward low complexity. An N-linked (GlcNAc...) asparagine glycan is attached at Asn179. The disordered stretch occupies residues 189-229 (RASLKSAHSYTTDSTFTEDDDITNEKLNHYGPAPEGRQDRR). The segment covering 194–203 (SAHSYTTDST) has biased composition (polar residues). 7 helical membrane passes run 659-679 (FISL…FYFV), 699-719 (IFVI…ILSL), 733-753 (TMVT…YIVI), 776-796 (IFTN…LMSF), 808-828 (SAQY…YAFC), 908-928 (YVVA…SEAY), and 945-967 (WSVA…INIV). The interval 994–1019 (AGLGSGFSESGKTGITSGSGMSGMSL) is disordered. Residues 1001 to 1019 (SESGKTGITSGSGMSGMSL) are compositionally biased toward low complexity.

It belongs to the chitin synthase family. Class II subfamily.

It localises to the cell membrane. It catalyses the reaction [(1-&gt;4)-N-acetyl-beta-D-glucosaminyl](n) + UDP-N-acetyl-alpha-D-glucosamine = [(1-&gt;4)-N-acetyl-beta-D-glucosaminyl](n+1) + UDP + H(+). In terms of biological role, polymerizes chitin, a structural polymer of the cell wall and septum, by transferring the sugar moiety of UDP-GlcNAc to the non-reducing end of the growing chitin polymer. CHS1 mainly responsible for normal yeast cell reproductive growth. The polypeptide is Chitin synthase 1 (Exophiala dermatitidis (strain ATCC 34100 / CBS 525.76 / NIH/UT8656) (Black yeast)).